Reading from the N-terminus, the 181-residue chain is MSRVAKSPITIPTGVEVTITSNLMSVKGRFGQLNMSIHPCIVITNTNNKLSFDITITEKKEQKKAWAQAGTARANTANLIQGVTEGWEKKLTLIGVGYRAKVMERVLNLTLGFSHPINYKLPEGITVEAPSQTEIIIKGMDKQKVGQVAAEIRAYHPPEPYKGKGVCYIDEQVVRKEAKKK.

The protein belongs to the universal ribosomal protein uL6 family. Part of the 50S ribosomal subunit.

Functionally, this protein binds to the 23S rRNA, and is important in its secondary structure. It is located near the subunit interface in the base of the L7/L12 stalk, and near the tRNA binding site of the peptidyltransferase center. The protein is Large ribosomal subunit protein uL6 of Ruthia magnifica subsp. Calyptogena magnifica.